The chain runs to 438 residues: Coenzyme A disulfide reductase (438 aa).

8–33 contributes to the FAD binding site; it reads GAVAGGATCASQIRRLDKESDIIIFE. Substrate contacts are provided by threonine 15, glutamine 19, arginine 22, serine 39, and asparagine 42. Cysteine 43 functions as the Nucleophile in the catalytic mechanism. Cysteine 43 functions as the Redox-active in the catalytic mechanism. Lysine 71 serves as a coordination point for substrate. Position 151-166 (151-166) interacts with NADP(+); that stretch reads VLVVGAGYVSLEVLEN. 267 to 277 is a binding site for FAD; that stretch reads TNVPNIYAIGD. Residue histidine 299 coordinates substrate. Tyrosine 419 serves as a coordination point for FAD. Lysine 427 is a binding site for substrate.

This sequence belongs to the class-III pyridine nucleotide-disulfide oxidoreductase family. As to quaternary structure, homodimer. FAD serves as cofactor.

It catalyses the reaction NADP(+) + 2 CoA = CoA-disulfide + NADPH + H(+). Functionally, catalyzes specifically the NADPH-dependent reduction of coenzyme A disulfide. The protein is Coenzyme A disulfide reductase of Staphylococcus aureus (strain USA300).